The following is a 421-amino-acid chain: 4'-demethylrebeccamycin synthase (421 aa).

Belongs to the glycosyltransferase 28 family.

It catalyses the reaction 4'-demethylrebeccamycin + H2O = dichloroarcyriaflavin A + beta-D-glucose. The protein operates within alkaloid biosynthesis. Functionally, catalyzes the penultimate step in the biosynthesis of rebeccamycin, an indolocarbazole alkaloid that inhibits topoisomerase 1. Has a wide substrate range, including staurosporine aglycone, EJG-III-108A, J-104303, 6-N-methyl-arcyriaflavin and indolo-[2,3-a]-carbazole. This is 4'-demethylrebeccamycin synthase (rebG) from Lentzea aerocolonigenes (Lechevalieria aerocolonigenes).